Here is a 503-residue protein sequence, read N- to C-terminus: uncharacterized protein (503 aa).

ABC transporter domains are found at residues 8–249 (VPVA…LGRD) and 261–499 (IVDQ…MSAI). 43–50 (GKNGAGKS) contributes to the ATP binding site.

It belongs to the ABC transporter superfamily.

Functionally, probably part of a binding-protein-dependent transport system YphDEF. Probably responsible for energy coupling to the transport system. This is an uncharacterized protein from Escherichia coli (strain K12).